A 435-amino-acid polypeptide reads, in one-letter code: Gamma-glutamyl phosphate reductase (435 aa).

It belongs to the gamma-glutamyl phosphate reductase family.

It is found in the cytoplasm. It catalyses the reaction L-glutamate 5-semialdehyde + phosphate + NADP(+) = L-glutamyl 5-phosphate + NADPH + H(+). It participates in amino-acid biosynthesis; L-proline biosynthesis; L-glutamate 5-semialdehyde from L-glutamate: step 2/2. Catalyzes the NADPH-dependent reduction of L-glutamate 5-phosphate into L-glutamate 5-semialdehyde and phosphate. The product spontaneously undergoes cyclization to form 1-pyrroline-5-carboxylate. The sequence is that of Gamma-glutamyl phosphate reductase from Parasynechococcus marenigrum (strain WH8102).